We begin with the raw amino-acid sequence, 390 residues long: 4-hydroxy-3-methylbut-2-en-1-yl diphosphate synthase (flavodoxin) (390 aa).

C281, C284, C316, and E323 together coordinate [4Fe-4S] cluster.

This sequence belongs to the IspG family. [4Fe-4S] cluster serves as cofactor.

It catalyses the reaction (2E)-4-hydroxy-3-methylbut-2-enyl diphosphate + oxidized [flavodoxin] + H2O + 2 H(+) = 2-C-methyl-D-erythritol 2,4-cyclic diphosphate + reduced [flavodoxin]. Its pathway is isoprenoid biosynthesis; isopentenyl diphosphate biosynthesis via DXP pathway; isopentenyl diphosphate from 1-deoxy-D-xylulose 5-phosphate: step 5/6. Its function is as follows. Converts 2C-methyl-D-erythritol 2,4-cyclodiphosphate (ME-2,4cPP) into 1-hydroxy-2-methyl-2-(E)-butenyl 4-diphosphate. In Salinispora arenicola (strain CNS-205), this protein is 4-hydroxy-3-methylbut-2-en-1-yl diphosphate synthase (flavodoxin).